We begin with the raw amino-acid sequence, 224 residues long: Extracellular protease inhibitor 10 (224 aa).

Residues 1–22 (MKSAFTLSLALVAVTATISAAA) form the signal peptide. Kazal-like domains lie at 23-72 (DDNC…ECAS), 90-127 (TSGT…AKCK), and 156-210 (GYQG…PCPS). N-linked (GlcNAc...) asparagine glycosylation occurs at N25. Cystine bridges form between C26/C56, C30/C49, and C38/C70. Residues 69–92 (ECASTPASSATPSPVTSSTGSTSG) form a disordered region. The span at 71-92 (ASTPASSATPSPVTSSTGSTSG) shows a compositional bias: low complexity. Cystine bridges form between C96–C126, C100–C119, C162–C193, C167–C186, and C175–C208. N-linked (GlcNAc...) asparagine glycosylation is present at N199. A disordered region spans residues 202–224 (MVGEGPCPSQEQQQQQQQQQQKL). The segment covering 211–224 (QEQQQQQQQQQQKL) has biased composition (low complexity).

Interacts with host subtilisin-like protease P69B.

The protein resides in the secreted. Its function is as follows. Secreted effector that interacts with and inhibits the pathogenesis-related P69B subtilisin-like serine protease of host tomato. Inhibition of host proteases by a pathogen extracellular protease inhibitor forms a specific type of defense-counterdefense mechanism between plants and microbial pathogens. In Phytophthora infestans (Potato late blight agent), this protein is Extracellular protease inhibitor 10.